A 258-amino-acid chain; its full sequence is Mediator of RNA polymerase II transcription subunit 18 (258 aa).

It belongs to the Mediator complex subunit 18 family. In terms of assembly, component of the Mediator complex.

The protein resides in the nucleus. Its function is as follows. Component of the Mediator complex, a coactivator involved in the regulated transcription of nearly all RNA polymerase II-dependent genes. Mediator functions as a bridge to convey information from gene-specific regulatory proteins to the basal RNA polymerase II transcription machinery. Mediator is recruited to promoters by direct interactions with regulatory proteins and serves as a scaffold for the assembly of a functional preinitiation complex with RNA polymerase II and the general transcription factors. This is Mediator of RNA polymerase II transcription subunit 18 (SRB5) from Eremothecium gossypii (strain ATCC 10895 / CBS 109.51 / FGSC 9923 / NRRL Y-1056) (Yeast).